The sequence spans 417 residues: Serine hydroxymethyltransferase (417 aa).

(6S)-5,6,7,8-tetrahydrofolate contacts are provided by residues Leu117 and 121-123 (GHL). Lys226 carries the N6-(pyridoxal phosphate)lysine modification.

The protein belongs to the SHMT family. Homodimer. Pyridoxal 5'-phosphate serves as cofactor.

It is found in the cytoplasm. The enzyme catalyses (6R)-5,10-methylene-5,6,7,8-tetrahydrofolate + glycine + H2O = (6S)-5,6,7,8-tetrahydrofolate + L-serine. It functions in the pathway one-carbon metabolism; tetrahydrofolate interconversion. It participates in amino-acid biosynthesis; glycine biosynthesis; glycine from L-serine: step 1/1. Functionally, catalyzes the reversible interconversion of serine and glycine with tetrahydrofolate (THF) serving as the one-carbon carrier. This reaction serves as the major source of one-carbon groups required for the biosynthesis of purines, thymidylate, methionine, and other important biomolecules. Also exhibits THF-independent aldolase activity toward beta-hydroxyamino acids, producing glycine and aldehydes, via a retro-aldol mechanism. This chain is Serine hydroxymethyltransferase, found in Syntrophus aciditrophicus (strain SB).